A 156-amino-acid chain; its full sequence is Aspartate 1-decarboxylase (156 aa).

Catalysis depends on Ser26, which acts as the Schiff-base intermediate with substrate; via pyruvic acid. At Ser26 the chain carries Pyruvic acid (Ser). Thr58 lines the substrate pocket. Tyr59 acts as the Proton donor in catalysis. 74–76 (GGA) contacts substrate.

It belongs to the PanD family. As to quaternary structure, heterooctamer of four alpha and four beta subunits. The cofactor is pyruvate. In terms of processing, is synthesized initially as an inactive proenzyme, which is activated by self-cleavage at a specific serine bond to produce a beta-subunit with a hydroxyl group at its C-terminus and an alpha-subunit with a pyruvoyl group at its N-terminus.

Its subcellular location is the cytoplasm. It carries out the reaction L-aspartate + H(+) = beta-alanine + CO2. Its pathway is cofactor biosynthesis; (R)-pantothenate biosynthesis; beta-alanine from L-aspartate: step 1/1. Catalyzes the pyruvoyl-dependent decarboxylation of aspartate to produce beta-alanine. This Gloeothece citriformis (strain PCC 7424) (Cyanothece sp. (strain PCC 7424)) protein is Aspartate 1-decarboxylase.